We begin with the raw amino-acid sequence, 343 residues long: 3-dehydroquinate synthase (343 aa).

Residues 61–66 (SGEKYK), 95–96 (GV), 119–120 (TT), Lys-132, Lys-141, Asn-142, and 159–162 (FLKT) each bind NAD(+). Zn(2+) is bound by residues Glu-174, His-231, and His-248.

It belongs to the sugar phosphate cyclases superfamily. Dehydroquinate synthase family. In terms of assembly, homodimer. NAD(+) serves as cofactor. It depends on Co(2+) as a cofactor. The cofactor is Zn(2+).

The protein resides in the cytoplasm. It carries out the reaction 7-phospho-2-dehydro-3-deoxy-D-arabino-heptonate = 3-dehydroquinate + phosphate. The protein operates within metabolic intermediate biosynthesis; chorismate biosynthesis; chorismate from D-erythrose 4-phosphate and phosphoenolpyruvate: step 2/7. Functionally, catalyzes the conversion of 3-deoxy-D-arabino-heptulosonate 7-phosphate (DAHP) to dehydroquinate (DHQ). This chain is 3-dehydroquinate synthase, found in Helicobacter pylori (strain ATCC 700392 / 26695) (Campylobacter pylori).